The primary structure comprises 675 residues: MAAQKNNAPKEYGADSITILEGLEAVRKRPGMYIGSTGERGLHHLIWEVVDNAVDEAMAGFATRVDVKIHADGSVEVRDDGRGIPVEMHATGMPTIDVVMTQLHAGGKFDGETYAVSGGLHGVGVSVVNALSTRLEATVLRDGYEWFQYYDRSVPGKLKQGGETKETGTTIRFWADPEIFETTDYNFETVARRLQEMAFLNKGLTIELTDERVTAEEVVDDVVKDTAEAPKTADEKAAEATGPSKVKHRVFHYPGGLVDYVKHINRTKTPIQQSIIDFDGKGPGHEVEIAMQWNAGYSESVHTFANTINTHEGGTHEEGFRAALTSVVNRYAKDKKLLKDKDPNLTGDDIREGLAAVISVKVAEPQFEGQTKTKLGNTEVKSFVQKICNEQLQHWFEANPAEAKTVVNKAVSSAQARIAARKARELVRRKSATDIGGLPGKLADCRSTDPSKSELYVVEGDSAGGSAKSGRDSMFQAILPLRGKIINVEKARIDRVLKNTEVQSIITALGTGIHDEFDISKLRYHKIVLMADADVDGQHISTLLLTLLFRFMKPLVENGHIFLAQPPLYKLKWQRSEPEFAYSDRERDGLLEAGRAAGKKINVDDGIQRYKGLGEMDAKELWETTMDPSVRVLRQVTLDDAAAADELFSILMGEDVEARRSFITRNAKDVRFLDV.

One can recognise a Toprim domain in the interval 453 to 567; that stretch reads SELYVVEGDS…NGHIFLAQPP (115 aa). Residues glutamate 459, aspartate 532, and aspartate 534 each coordinate Mg(2+).

The protein belongs to the type II topoisomerase GyrB family. As to quaternary structure, heterotetramer, composed of two GyrA and two GyrB chains. In the heterotetramer, GyrA contains the active site tyrosine that forms a transient covalent intermediate with DNA, while GyrB binds cofactors and catalyzes ATP hydrolysis. Mg(2+) is required as a cofactor. The cofactor is Mn(2+). Requires Ca(2+) as cofactor.

The protein resides in the cytoplasm. It carries out the reaction ATP-dependent breakage, passage and rejoining of double-stranded DNA.. Inhibited by 4-quinoline drugs (nalidixic acid, ciprofloxacin, ofloxacin), although it is much less sensitive than the corresponding enzyme from E.coli. GyrB intrinsic ATPase activity inhibited by aminopyrazinamide and pyrrolamide derivatives. Functionally, a type II topoisomerase that negatively supercoils closed circular double-stranded (ds) DNA in an ATP-dependent manner to modulate DNA topology and maintain chromosomes in an underwound state. Negative supercoiling favors strand separation, and DNA replication, transcription, recombination and repair, all of which involve strand separation. Also able to catalyze the interconversion of other topological isomers of dsDNA rings, including catenanes and knotted rings. Type II topoisomerases break and join 2 DNA strands simultaneously in an ATP-dependent manner. The protein is DNA gyrase subunit B of Mycolicibacterium smegmatis (strain ATCC 700084 / mc(2)155) (Mycobacterium smegmatis).